Here is a 162-residue protein sequence, read N- to C-terminus: Putative colanic acid biosynthesis acetyltransferase WcaB (162 aa).

The protein belongs to the transferase hexapeptide repeat family.

It participates in slime biogenesis; slime polysaccharide biosynthesis. This is Putative colanic acid biosynthesis acetyltransferase WcaB (wcaB) from Escherichia coli O157:H7.